A 99-amino-acid polypeptide reads, in one-letter code: uncharacterized protein (99 aa).

This is an uncharacterized protein from Acidianus bottle-shaped virus (isolate Italy/Pozzuoli) (ABV).